The following is a 95-amino-acid chain: Protein RnfH (95 aa).

It belongs to the UPF0125 (RnfH) family.

The chain is Protein RnfH from Erwinia tasmaniensis (strain DSM 17950 / CFBP 7177 / CIP 109463 / NCPPB 4357 / Et1/99).